Reading from the N-terminus, the 309-residue chain is Porphobilinogen deaminase (309 aa).

Residue cysteine 241 is modified to S-(dipyrrolylmethanemethyl)cysteine.

The protein belongs to the HMBS family. Monomer. Dipyrromethane is required as a cofactor.

The catalysed reaction is 4 porphobilinogen + H2O = hydroxymethylbilane + 4 NH4(+). It participates in porphyrin-containing compound metabolism; protoporphyrin-IX biosynthesis; coproporphyrinogen-III from 5-aminolevulinate: step 2/4. In terms of biological role, tetrapolymerization of the monopyrrole PBG into the hydroxymethylbilane pre-uroporphyrinogen in several discrete steps. The sequence is that of Porphobilinogen deaminase from Geobacillus kaustophilus (strain HTA426).